The chain runs to 222 residues: Pyridoxine/pyridoxamine 5'-phosphate oxidase (222 aa).

Substrate contacts are provided by residues 11–14 (RVEY) and Lys79. FMN is bound by residues 74–79 (RTVLCK), 89–90 (YT), Lys96, and Gln118. Tyr136, Arg140, and Ser144 together coordinate substrate. FMN is bound by residues 153–154 (QS) and Trp199. 205 to 207 (RVH) lines the substrate pocket. Arg209 provides a ligand contact to FMN.

The protein belongs to the pyridoxamine 5'-phosphate oxidase family. Homodimer. It depends on FMN as a cofactor.

It catalyses the reaction pyridoxamine 5'-phosphate + O2 + H2O = pyridoxal 5'-phosphate + H2O2 + NH4(+). The enzyme catalyses pyridoxine 5'-phosphate + O2 = pyridoxal 5'-phosphate + H2O2. It functions in the pathway cofactor metabolism; pyridoxal 5'-phosphate salvage; pyridoxal 5'-phosphate from pyridoxamine 5'-phosphate: step 1/1. Its pathway is cofactor metabolism; pyridoxal 5'-phosphate salvage; pyridoxal 5'-phosphate from pyridoxine 5'-phosphate: step 1/1. In terms of biological role, catalyzes the oxidation of either pyridoxine 5'-phosphate (PNP) or pyridoxamine 5'-phosphate (PMP) into pyridoxal 5'-phosphate (PLP). In Mycolicibacterium vanbaalenii (strain DSM 7251 / JCM 13017 / BCRC 16820 / KCTC 9966 / NRRL B-24157 / PYR-1) (Mycobacterium vanbaalenii), this protein is Pyridoxine/pyridoxamine 5'-phosphate oxidase.